A 798-amino-acid chain; its full sequence is MERIYLLLLLFLPRIRSYDVRSVTTSWGMVRGEVVSPEGDDLPPVAQYLGIPYGVAPTGQYRFNMAISAAKWTHMPKDARKVSPVCIQTDMPELSETKAFKHTSAQRFDFNHRLLPHLKKQSEDCLYMNIYVPERLEISRDNYLPVMVIVHGEEYGWGTGNAFNGTTLAAYGHIIVVTLNYRLGVFGFLGRCESSSCSGNSGISDLVSALTMLNVILPSFGGDSKSVTLAGWGSGASLVSLLMASPLTQPGRRLFRRAILLDGSALSPWAISQNPQQYFMQLAEELACAPKNRTSSFNDNVDTIVRCMQVHSSENITKAVLKIDVPTFLSGFAPIVDGQLIPNKPQVSFSTQYGSLFREIDLLVGISSNPSHHMISNEDLKVGISKEKRMRIFRSLVRNLYDFHREEILASIINEYTDWENPRDHPKSIRNGVLNALSDVLYTAPLIETLRSHSADEVRKEANTFMFAFAHETRSWSQEQPNSGIRGSLSGDIVPYIFGYPLAQGDSEERLYSGFNTDDKGISKVMMHYVSNFVKSGDPSKPNPMSKNFPMGDVFHSTAWPQFDQPNREAYLEITDRPRVKNYYRNAQVGFWNNFIPQLHKNGKETEPVGEEHHLLSDHFRKDSYFGKTRHFSSYANLPFPPPPMPPSPPPELTTKPKPSESPTTLQTTTESEKAAAGSFTGKALGGVIFIGCGFLIMNVCLLIAVRREWGKKRRNEKKFQLQYQTYNSNHGGGAEQYNSLNSPEPLLSASHKNSTSMRPAGISPTCPRHGRAALALQNSRGNSLTAAQAPTLEEIQV.

The N-terminal stretch at 1–17 is a signal peptide; that stretch reads MERIYLLLLLFLPRIRS. The Extracellular portion of the chain corresponds to 18–685; that stretch reads YDVRSVTTSW…AAGSFTGKAL (668 aa). The cysteines at positions 86 and 125 are disulfide-linked. N-linked (GlcNAc...) asparagine glycosylation is found at Asn164, Asn292, and Asn315. Cys288 and Cys307 form a disulfide bridge. Residues 636 to 676 form a disordered region; that stretch reads ANLPFPPPPMPPSPPPELTTKPKPSESPTTLQTTTESEKAA. The segment covering 639–652 has biased composition (pro residues); it reads PFPPPPMPPSPPPE. The span at 653–665 shows a compositional bias: low complexity; it reads LTTKPKPSESPTT. Residues 686–706 form a helical membrane-spanning segment; that stretch reads GGVIFIGCGFLIMNVCLLIAV. The Cytoplasmic segment spans residues 707–798; it reads RREWGKKRRN…QAPTLEEIQV (92 aa). The disordered stretch occupies residues 731-765; the sequence is HGGGAEQYNSLNSPEPLLSASHKNSTSMRPAGISP.

Belongs to the type-B carboxylesterase/lipase family. As to quaternary structure, interacts (via extracellular domain) with isoform b of madd-4; the interaction is required for the localization to postsynaptic domains. Interacts with unc-49.

The protein localises to the cell membrane. The protein resides in the synapse. Probable neuronal cell surface protein thought to be involved in cell-cell-interactions by forming intercellular junctions through binding to beta-neurexins. Plays a role in the clustering of the GABA(A) receptor unc-49 at postsynaptic sites in neuromuscular junctions (NMJs) via the interaction with madd-4 and neurexin nrx-1 and is thereby required for normal GABAergic synaptic transmission. This Caenorhabditis elegans protein is Neuroligin-1 (nlg-1).